A 119-amino-acid polypeptide reads, in one-letter code: Non-specific lipid-transfer protein 3 (119 aa).

The signal sequence occupies residues 1–24 (MARSMKLACVVLAMCMLVAPMAEA). Cystine bridges form between Cys28/Cys77, Cys38/Cys54, Cys55/Cys100, and Cys75/Cys114.

This sequence belongs to the plant LTP family. Expressed in roots, stem, leaves and tendrils of the mature plant.

Plant non-specific lipid-transfer proteins transfer phospholipids as well as galactolipids across membranes. May play a role in wax or cutin deposition in the cell walls of expanding epidermal cells and certain secretory tissues. The sequence is that of Non-specific lipid-transfer protein 3 from Pisum sativum (Garden pea).